The primary structure comprises 1163 residues: Integrin alpha-X (1163 aa).

The N-terminal stretch at Met1 to Gly19 is a signal peptide. The Extracellular portion of the chain corresponds to Phe20–Pro1107. FG-GAP repeat units lie at residues Asp23 to Pro78 and Ile79 to Leu138. Asn61 carries N-linked (GlcNAc...) asparagine glycosylation. Cys69 and Cys76 form a disulfide bridge. The N-linked (GlcNAc...) asparagine glycan is linked to Asn89. 2 cysteine pairs are disulfide-bonded: Cys108/Cys126 and Cys116/Cys145. Mg(2+) is bound by residues Asp157, Ser159, Ser161, and Asp259. The VWFA domain occupies Arg165–Thr339. 5 FG-GAP repeats span residues Glu340–Ile391, Asn392–Trp443, Arg444–Trp504, Asp507–Ser565, and Gln570–Ala630. An N-linked (GlcNAc...) asparagine glycan is attached at Asn392. Residues Asp466, Asp468, Asp470, and Asp474 each contribute to the Ca(2+) site. Cys495 and Cys506 are oxidised to a cystine. Positions 530, 532, 534, 538, 593, 597, and 601 each coordinate Ca(2+). 2 disulfide bridges follow: Cys639-Cys722 and Cys655-Cys712. 2 N-linked (GlcNAc...) asparagine glycosylation sites follow: Asn697 and Asn735. Disulfide bonds link Cys771–Cys777 and Cys848–Cys863. 2 N-linked (GlcNAc...) asparagine glycosylation sites follow: Asn899 and Asn939. Intrachain disulfides connect Cys998-Cys1022 and Cys1027-Cys1032. N-linked (GlcNAc...) asparagine glycosylation occurs at Asn1050. The chain crosses the membrane as a helical span at residues Leu1108 to Tyr1128. The Cytoplasmic portion of the chain corresponds to Lys1129–Lys1163. Residues Gly1131–Arg1135 carry the GFFKR motif motif.

It belongs to the integrin alpha chain family. As to quaternary structure, heterodimer of an alpha and a beta subunit. Alpha-X associates with beta-2. Predominantly expressed in monocytes and granulocytes.

It localises to the membrane. Integrin alpha-X/beta-2 is a receptor for fibrinogen. It recognizes the sequence G-P-R in fibrinogen. It mediates cell-cell interaction during inflammatory responses. It is especially important in monocyte adhesion and chemotaxis. The polypeptide is Integrin alpha-X (ITGAX) (Homo sapiens (Human)).